Consider the following 466-residue polypeptide: Arginine biosynthesis bifunctional protein ArgJ, mitochondrial (466 aa).

Residues 1 to 9 (MSSLVLKRF) constitute a mitochondrion transit peptide. The substrate site is built by Thr183, Lys209, Thr232, Glu320, Asn461, and Ser466. Catalysis depends on Thr232, which acts as the Nucleophile.

This sequence belongs to the ArgJ family. Heterodimer of an alpha and a beta chain. Post-translationally, the alpha and beta chains are autoproteolytically processed from a single precursor protein within the mitochondrion.

The protein resides in the mitochondrion matrix. It catalyses the reaction N(2)-acetyl-L-ornithine + L-glutamate = N-acetyl-L-glutamate + L-ornithine. It carries out the reaction L-glutamate + acetyl-CoA = N-acetyl-L-glutamate + CoA + H(+). The protein operates within amino-acid biosynthesis; L-arginine biosynthesis; L-ornithine and N-acetyl-L-glutamate from L-glutamate and N(2)-acetyl-L-ornithine (cyclic): step 1/1. It participates in amino-acid biosynthesis; L-arginine biosynthesis; N(2)-acetyl-L-ornithine from L-glutamate: step 1/4. Catalyzes two activities which are involved in the cyclic version of arginine biosynthesis: the synthesis of acetylglutamate from glutamate and acetyl-CoA, and of ornithine by transacetylation between acetylornithine and glutamate. This is Arginine biosynthesis bifunctional protein ArgJ, mitochondrial from Laccaria bicolor (strain S238N-H82 / ATCC MYA-4686) (Bicoloured deceiver).